A 265-amino-acid chain; its full sequence is 3-deoxy-manno-octulosonate cytidylyltransferase 2 (265 aa).

This sequence belongs to the KdsB family.

Its subcellular location is the cytoplasm. The catalysed reaction is 3-deoxy-alpha-D-manno-oct-2-ulosonate + CTP = CMP-3-deoxy-beta-D-manno-octulosonate + diphosphate. The protein operates within nucleotide-sugar biosynthesis; CMP-3-deoxy-D-manno-octulosonate biosynthesis; CMP-3-deoxy-D-manno-octulosonate from 3-deoxy-D-manno-octulosonate and CTP: step 1/1. It participates in bacterial outer membrane biogenesis; lipopolysaccharide biosynthesis. Its function is as follows. Activates KDO (a required 8-carbon sugar) for incorporation into bacterial lipopolysaccharide in Gram-negative bacteria. The sequence is that of 3-deoxy-manno-octulosonate cytidylyltransferase 2 from Burkholderia lata (strain ATCC 17760 / DSM 23089 / LMG 22485 / NCIMB 9086 / R18194 / 383).